We begin with the raw amino-acid sequence, 120 residues long: Xibalbin-1 (120 aa).

A signal peptide spans 1-21 (MISKILIAACALLLISHLVLA). Residues 22–63 (VPYLEDGLNSLHNRTGESDETRGYTIQLLKEMPEDDAVEDYS) constitute a propeptide that is removed on maturation. 4 cysteine pairs are disulfide-bonded: Cys-79-Cys-94, Cys-86-Cys-99, Cys-93-Cys-110, and Cys-101-Cys-108.

The protein belongs to the xibalbin-1 family. Expressed by the venom gland. Not found in the whole body.

Its subcellular location is the secreted. In terms of biological role, probable neurotoxin. Strongly inhibits voltage-gated potassium channels (Kv1.1/KCNA1, Kv1.2/KCNA2, Kv1.3/KCNA3, and Kv1.6/KCNA6, with the highest toxicity against Kv1.6 (74% inhibition at 1 uM)) and mildly inhibits sodium channels (Nav1.2/SCN2A, Nav1.4/SCN4A, Nav1.5/SCN5A, Nav1.6/SCN8A, and BgNav). Induces activation of protein kinase A type II (PKA-II) and MAP kinase Erk1/2 in primary nociceptive and non-nociceptive sensory neurons. Does not show cytotoxic activity. Does not have an impact on Ca2+, cAMP, and NO signaling in the cell types analyzed. Does not interfere with the adhesion of leukocytes to endothelial cells. In Xibalbanus tulumensis (Blind cave remipede), this protein is Xibalbin-1.